The following is a 231-amino-acid chain: Ion-translocating oxidoreductase complex subunit E (231 aa).

6 helical membrane-spanning segments follow: residues 18 to 38, 39 to 59, 69 to 89, 93 to 113, 127 to 147, and 182 to 202; these read GLVQ…LTNA, LGLG…VSLV, IPVF…FINA, GLYL…VIIG, STFD…VLGA, and TFLL…LIAL.

This sequence belongs to the NqrDE/RnfAE family. As to quaternary structure, the complex is composed of six subunits: RnfA, RnfB, RnfC, RnfD, RnfE and RnfG.

Its subcellular location is the cell inner membrane. Functionally, part of a membrane-bound complex that couples electron transfer with translocation of ions across the membrane. The polypeptide is Ion-translocating oxidoreductase complex subunit E (Shewanella piezotolerans (strain WP3 / JCM 13877)).